A 607-amino-acid polypeptide reads, in one-letter code: Chaperone protein DnaK (607 aa).

Residue Thr173 is modified to Phosphothreonine; by autocatalysis. Basic and acidic residues-rich tracts occupy residues 490–509 and 524–542; these read EQNAEEDKKRREESDLRNEA and GDNVSEDDKKQAEDKKEAL. Disordered regions lie at residues 490–510, 524–555, and 574–607; these read EQNAEEDKKRREESDLRNEAD, GDNVSEDDKKQAEDKKEALKSALEGQDLEDIK, and QQAQQGDAAGSNQSDVEDAEYTEVKDDDDKKDNK. Positions 574–587 are enriched in polar residues; sequence QQAQQGDAAGSNQS. Over residues 595–607 the composition is skewed to basic and acidic residues; the sequence is TEVKDDDDKKDNK.

It belongs to the heat shock protein 70 family.

Its function is as follows. Acts as a chaperone. This chain is Chaperone protein DnaK, found in Staphylococcus carnosus (strain TM300).